The chain runs to 268 residues: Phosphatidylcholine synthase (268 aa).

The Cytoplasmic portion of the chain corresponds to 1–27 (MAARKAAKKLTDRIPRPKKKVTWPQAR). A helical transmembrane segment spans residues 28–48 (AFSVHLLTASGSFLAFLSLVA). The Periplasmic portion of the chain corresponds to 49-53 (ASEER). The chain crosses the membrane as a helical span at residues 54 to 74 (WTAMFWWLGLALFVDGIDGPI). Residues 75–88 (ARKLEVKEILPTWS) are Cytoplasmic-facing. The chain crosses the membrane as a helical span at residues 89–109 (GELLDNIIDYVTYVLIPAFAL). Residues 110–112 (YQR) are Periplasmic-facing. A helical membrane pass occupies residues 113–133 (GFMGEGLSFLSAAIIVVSSAI). At 134–145 (YYADTGMKTKEN) the chain is on the cytoplasmic side. A helical membrane pass occupies residues 146–166 (FFKGFPVVWNMVVFTLFVIEP). Residues 167–168 (GQ) are Periplasmic-facing. Residues 169-189 (WVSFAVVVVAGILTFVPINFI) traverse the membrane as a helical segment. At 190 to 203 (HPVRVVRLRPFNLT) the chain is on the cytoplasmic side. The helical transmembrane segment at 204–224 (MTLLWCAFGALALAQAALAAF) threads the bilayer. Residues 225-240 (YDQIGVLGAQVSTFIK) are Periplasmic-facing. The chain crosses the membrane as a helical span at residues 241 to 261 (IGITITGLYLACIGGIMQFFP). Residues 262 to 268 (NLGAKKA) are Cytoplasmic-facing.

The protein belongs to the CDP-alcohol phosphatidyltransferase class-I family. Mn(2+) is required as a cofactor.

It localises to the cell inner membrane. The catalysed reaction is a CDP-1,2-diacyl-sn-glycerol + choline = a 1,2-diacyl-sn-glycero-3-phosphocholine + CMP + H(+). Condenses choline with CDP-diglyceride to produce phosphatidylcholine and CMP. The protein is Phosphatidylcholine synthase (pcs) of Mesorhizobium japonicum (strain LMG 29417 / CECT 9101 / MAFF 303099) (Mesorhizobium loti (strain MAFF 303099)).